Consider the following 260-residue polypeptide: Dehydrogenase/reductase SDR family member 11 (260 aa).

A signal peptide spans 1-30 (MTRAGMERWRDRLALVTGASGGIGAAVARA). NADP(+) contacts are provided by residues 18 to 23 (GASGGI), 43 to 44 (RT), E49, 70 to 71 (DL), and N97. The substrate site is built by S151 and Y166. NADP(+) is bound by residues Y166, K170, 201-204 (VETQ), and K208. The Proton acceptor role is filled by Y166.

Belongs to the short-chain dehydrogenases/reductases (SDR) family. In terms of assembly, homotetramer.

The protein localises to the secreted. The catalysed reaction is a 3beta-hydroxysteroid + NADP(+) = a 3-oxosteroid + NADPH + H(+). The enzyme catalyses 17beta-estradiol + NAD(+) = estrone + NADH + H(+). It catalyses the reaction 17beta-estradiol + NADP(+) = estrone + NADPH + H(+). Its pathway is steroid biosynthesis; estrogen biosynthesis. Inhibited by flavonoids including apigenin, luteolin, genistein, kaempferol and quercetin and also by carbenoxolone, zearalenone, glycyrrhetinic, curcumin and flufenamic acid. Functionally, catalyzes the conversion of the 17-keto group of estrone, 4- and 5-androstenes and 5-alpha-androstanes into their 17-beta-hydroxyl metabolites and the conversion of the 3-keto group of 3-, 3,17- and 3,20- diketosteroids into their 3-hydroxyl metabolites. Exhibits reductive 3-beta-hydroxysteroid dehydrogenase activity toward 5-beta-androstanes, 5-beta-pregnanes, 4-pregnenes and bile acids. May also reduce endogenous and exogenous alpha-dicarbonyl compounds and xenobiotic alicyclic ketones. The sequence is that of Dehydrogenase/reductase SDR family member 11 (Dhrs11) from Mus musculus (Mouse).